A 239-amino-acid polypeptide reads, in one-letter code: Fatty acid metabolism regulator protein (239 aa).

Residues 6-74 enclose the HTH gntR-type domain; that stretch reads QSPAGFAEEY…HGKPTKVNNF (69 aa). Positions 34 to 53 form a DNA-binding region, H-T-H motif; sequence ERELSELIGVTRTTLREVLQ.

As to quaternary structure, homodimer.

The protein resides in the cytoplasm. Multifunctional regulator of fatty acid metabolism. The chain is Fatty acid metabolism regulator protein from Klebsiella pneumoniae subsp. pneumoniae (strain ATCC 700721 / MGH 78578).